We begin with the raw amino-acid sequence, 177 residues long: Large ribosomal subunit protein uL6 (177 aa).

It belongs to the universal ribosomal protein uL6 family. In terms of assembly, part of the 50S ribosomal subunit.

In terms of biological role, this protein binds to the 23S rRNA, and is important in its secondary structure. It is located near the subunit interface in the base of the L7/L12 stalk, and near the tRNA binding site of the peptidyltransferase center. This is Large ribosomal subunit protein uL6 from Rickettsia akari (strain Hartford).